The chain runs to 573 residues: Dihydroxy-acid dehydratase (573 aa).

Cys-62 is a binding site for [2Fe-2S] cluster. Asp-94 contacts Mg(2+). Cys-135 lines the [2Fe-2S] cluster pocket. Residues Asp-136 and Lys-137 each contribute to the Mg(2+) site. The residue at position 137 (Lys-137) is an N6-carboxylysine. Cys-212 contacts [2Fe-2S] cluster. Glu-463 provides a ligand contact to Mg(2+). The active-site Proton acceptor is the Ser-489.

The protein belongs to the IlvD/Edd family. Homodimer. The cofactor is [2Fe-2S] cluster. Mg(2+) serves as cofactor.

The enzyme catalyses (2R)-2,3-dihydroxy-3-methylbutanoate = 3-methyl-2-oxobutanoate + H2O. It carries out the reaction (2R,3R)-2,3-dihydroxy-3-methylpentanoate = (S)-3-methyl-2-oxopentanoate + H2O. It participates in amino-acid biosynthesis; L-isoleucine biosynthesis; L-isoleucine from 2-oxobutanoate: step 3/4. It functions in the pathway amino-acid biosynthesis; L-valine biosynthesis; L-valine from pyruvate: step 3/4. Its function is as follows. Functions in the biosynthesis of branched-chain amino acids. Catalyzes the dehydration of (2R,3R)-2,3-dihydroxy-3-methylpentanoate (2,3-dihydroxy-3-methylvalerate) into 2-oxo-3-methylpentanoate (2-oxo-3-methylvalerate) and of (2R)-2,3-dihydroxy-3-methylbutanoate (2,3-dihydroxyisovalerate) into 2-oxo-3-methylbutanoate (2-oxoisovalerate), the penultimate precursor to L-isoleucine and L-valine, respectively. In Renibacterium salmoninarum (strain ATCC 33209 / DSM 20767 / JCM 11484 / NBRC 15589 / NCIMB 2235), this protein is Dihydroxy-acid dehydratase.